The primary structure comprises 50 residues: Insulin-1 (50 aa).

3 disulfide bridges follow: Cys-7/Cys-36, Cys-19/Cys-49, and Cys-35/Cys-40.

This sequence belongs to the insulin family. Heterodimer of a B chain and an A chain linked by two disulfide bonds.

It is found in the secreted. In terms of biological role, insulin decreases blood glucose concentration. It increases cell permeability to monosaccharides, amino acids and fatty acids. It accelerates glycolysis, the pentose phosphate cycle, and glycogen synthesis in liver. This Thunnus orientalis (North Pacific bluefin tuna) protein is Insulin-1.